Reading from the N-terminus, the 302-residue chain is Quinolinate synthase (302 aa).

The iminosuccinate site is built by H24 and S41. C86 serves as a coordination point for [4Fe-4S] cluster. Residues 112–114 (YVN) and S129 contribute to the iminosuccinate site. Position 171 (C171) interacts with [4Fe-4S] cluster. Residues 197–199 (HPE) and T214 contribute to the iminosuccinate site. C259 is a [4Fe-4S] cluster binding site.

The protein belongs to the quinolinate synthase family. Type 2 subfamily. [4Fe-4S] cluster is required as a cofactor.

It localises to the cytoplasm. The catalysed reaction is iminosuccinate + dihydroxyacetone phosphate = quinolinate + phosphate + 2 H2O + H(+). It functions in the pathway cofactor biosynthesis; NAD(+) biosynthesis; quinolinate from iminoaspartate: step 1/1. Its function is as follows. Catalyzes the condensation of iminoaspartate with dihydroxyacetone phosphate to form quinolinate. The protein is Quinolinate synthase of Dehalococcoides mccartyi (strain ATCC BAA-2100 / JCM 16839 / KCTC 5957 / BAV1).